A 279-amino-acid chain; its full sequence is Phosphonates import ATP-binding protein PhnC 2 (279 aa).

The region spanning 10–253 (LSLKGVSVRY…VARNLYAKQS (244 aa)) is the ABC transporter domain. Residue 43–50 (GASGAGKS) coordinates ATP. Low complexity predominate over residues 253-262 (SNASNTSAST). A disordered region spans residues 253–279 (SNASNTSASTDSPRTLQSSQTKELLPC). The segment covering 263–279 (DSPRTLQSSQTKELLPC) has biased composition (polar residues).

It belongs to the ABC transporter superfamily. Phosphonates importer (TC 3.A.1.9.1) family. The complex is composed of two ATP-binding proteins (PhnC), two transmembrane proteins (PhnE) and a solute-binding protein (PhnD).

The protein resides in the cell inner membrane. It catalyses the reaction phosphonate(out) + ATP + H2O = phosphonate(in) + ADP + phosphate + H(+). Part of the ABC transporter complex PhnCDE involved in phosphonates import. Responsible for energy coupling to the transport system. This chain is Phosphonates import ATP-binding protein PhnC 2, found in Cupriavidus metallidurans (strain ATCC 43123 / DSM 2839 / NBRC 102507 / CH34) (Ralstonia metallidurans).